The sequence spans 104 residues: Large ribosomal subunit protein uL24 (104 aa).

The protein belongs to the universal ribosomal protein uL24 family. In terms of assembly, part of the 50S ribosomal subunit.

One of two assembly initiator proteins, it binds directly to the 5'-end of the 23S rRNA, where it nucleates assembly of the 50S subunit. In terms of biological role, one of the proteins that surrounds the polypeptide exit tunnel on the outside of the subunit. In Bartonella quintana (strain Toulouse) (Rochalimaea quintana), this protein is Large ribosomal subunit protein uL24.